The chain runs to 169 residues: Ribosome maturation factor RimM (169 aa).

A PRC barrel domain is found at 96 to 166 (EDEFYFADLI…AVVVRPVEVE (71 aa)).

The protein belongs to the RimM family. In terms of assembly, binds ribosomal protein uS19.

It localises to the cytoplasm. An accessory protein needed during the final step in the assembly of 30S ribosomal subunit, possibly for assembly of the head region. Essential for efficient processing of 16S rRNA. May be needed both before and after RbfA during the maturation of 16S rRNA. It has affinity for free ribosomal 30S subunits but not for 70S ribosomes. This is Ribosome maturation factor RimM from Acidiphilium cryptum (strain JF-5).